We begin with the raw amino-acid sequence, 1056 residues long: Potassium transporter TRK1 (1056 aa).

The Cytoplasmic portion of the chain corresponds to 1 to 46; that stretch reads MLYRVSGFYKRHTRNFTNIDYGYYIRNFIHHIASKIYPYAKVVLPN. Residues 47–67 traverse the membrane as a helical segment; the sequence is FRAAHYFYILTLVILGSILVY. At 68-73 the chain is on the extracellular side; it reads PVKTCA. The stretch at 74–90 is an intramembrane region; the sequence is YIDVLFFTAGASTQAGL. Topologically, residues 91-99 are extracellular; that stretch reads NTVNVNDLS. Residues 100 to 122 form a helical membrane-spanning segment; sequence LYQQIVLYLLATLATPIFIHGSL. Over 123–622 the chain is Cytoplasmic; the sequence is LFVRLYYFER…LGGIEYRAVK (500 aa). Disordered stretches follow at residues 180–276, 290–350, and 404–571; these read REAE…IDPE, KNQE…EDED, and PWTS…SIEN. Residues 186 to 203 show a composition bias toward low complexity; it reads SSSSPQSSSSQTSQPVST. Positions 236 to 245 are enriched in basic and acidic residues; it reads EKIHFEEPQR. Polar residues predominate over residues 335-344; that stretch reads PATNSVGTGN. Residues 412–423 show a composition bias toward low complexity; it reads TLSNSSKKGSLS. Composition is skewed to acidic residues over residues 428 to 449 and 469 to 487; these read DTED…SDIS and YEED…DDGE. The span at 521–533 shows a compositional bias: polar residues; it reads RSNTLDTPQQNTS. Residues 537–549 show a composition bias toward basic residues; that stretch reads KIRKKAPKRKTPR. Positions 553 to 563 are enriched in polar residues; the sequence is NASFNQHSNVS. Residues 623–646 traverse the membrane as a helical segment; that stretch reads LLIKIIVVYYVGFNIIPGVMLSIW. The Extracellular portion of the chain corresponds to 647 to 665; sequence IYCMPHYKNLMISSSISPA. An intramembrane segment occupies 666–682; it reads WWAFFTSQSSFNDLGLT. Residues 683–693 are Extracellular-facing; the sequence is LTSNSMMSFNQ. A helical transmembrane segment spans residues 694-710; that stretch reads NAFVQILCSFLIVIGNT. The Cytoplasmic segment spans residues 711-754; it reads GFPILLRFIIWVMFKTARPLSLYKESLGFLLDHPRRCFTLLFPS. A helical membrane pass occupies residues 755–778; that stretch reads VPTWWLFFILVVLNGFDLVIFCIL. The Extracellular segment spans residues 779-793; that stretch reads DLHDDTFKGVDMGYR. Residues 794–810 lie within the membrane without spanning it; the sequence is VLNGLFQAFCTRTVGFS. The Extracellular segment spans residues 811-817; it reads VMDLSQL. Residues 818 to 841 form a helical membrane-spanning segment; it reads HAATQVSYLIMMYISVLPIAISVR. The Cytoplasmic portion of the chain corresponds to 842–874; the sequence is RTNVYEEQSLGVYAKENAEGVDESAPSNYVGSH. A helical transmembrane segment spans residues 875-896; it reads LRNQLSYDLWYICLGLFIICIA. Topologically, residues 897-909 are extracellular; the sequence is EGKRLKEQDLRFS. Residues 910–928 lie within the membrane without spanning it; sequence IFAVLFEIVSAYGTVGMSM. The Extracellular portion of the chain corresponds to 929 to 942; the sequence is GYPGVDCSLSGEFN. Residues 943–965 form a helical membrane-spanning segment; it reads VISKLVIIAMMIRGRHRGLPYTI. Residues 966–1056 are Cytoplasmic-facing; sequence DRAIMLPNAA…RYVVRTVSEV (91 aa).

It belongs to the TrkH potassium transport family.

It is found in the cell membrane. It carries out the reaction K(+)(in) = K(+)(out). The enzyme catalyses chloride(in) = chloride(out). With respect to regulation, TRK1-mediated chloride conductance is blocked by 4,4'-diisothiocyanatostilbene-2,2'-disulfonic acid. Potassium transporter that mediates K(+) influx, as well as Cl(-) efflux as a secondary function. TRK1 is the major K(+) uptake transporter that regulates membrane potential and intracellular pH. The TRK1-mediated Cl(-) efflux should serve as a Cl(-) detoxification route and may play a role in sustaining C.albicans on mammalian epithelial surfaces, or in physiological saline solutions such as saliva. Its function is as follows. Mediates candidacidal activities of cysteine-free peptides, but not of defensins. The hallmark of salivary gland-secreted histatin-5 (Hst 5) killing of C.albicans is the rapid efflux of cellular ATP and other small nucleotides and ions from the cell as well as concurrent intracellular uptake of propidium iodide (PI). TRK1 is the channel for Hst 5-induced killing and histatin-5 may directly or indirectly alter TRK1 function, allowing the efflux of larger anions, including ATP, and the influx of small cationic dyes, such as PI. In Candida albicans (strain SC5314 / ATCC MYA-2876) (Yeast), this protein is Potassium transporter TRK1.